The primary structure comprises 660 residues: Acetyl-coenzyme A synthetase (660 aa).

CoA contacts are provided by residues 197–200 (RGGK) and T317. Residues 397–399 (GEP), 421–426 (DTWWQT), D512, and R528 each bind ATP. Residue S536 participates in CoA binding. R539 is an ATP binding site. Mg(2+) contacts are provided by V550, H552, and V555. The residue at position 625 (K625) is an N6-acetyllysine.

Belongs to the ATP-dependent AMP-binding enzyme family. Requires Mg(2+) as cofactor. In terms of processing, acetylated. Deacetylation by the SIR2-homolog deacetylase activates the enzyme.

The catalysed reaction is acetate + ATP + CoA = acetyl-CoA + AMP + diphosphate. Functionally, catalyzes the conversion of acetate into acetyl-CoA (AcCoA), an essential intermediate at the junction of anabolic and catabolic pathways. AcsA undergoes a two-step reaction. In the first half reaction, AcsA combines acetate with ATP to form acetyl-adenylate (AcAMP) intermediate. In the second half reaction, it can then transfer the acetyl group from AcAMP to the sulfhydryl group of CoA, forming the product AcCoA. The polypeptide is Acetyl-coenzyme A synthetase (Burkholderia lata (strain ATCC 17760 / DSM 23089 / LMG 22485 / NCIMB 9086 / R18194 / 383)).